The primary structure comprises 200 residues: NADH-quinone oxidoreductase subunit C (200 aa).

The protein belongs to the complex I 30 kDa subunit family. As to quaternary structure, NDH-1 is composed of 14 different subunits. Subunits NuoB, C, D, E, F, and G constitute the peripheral sector of the complex.

It localises to the cell inner membrane. The enzyme catalyses a quinone + NADH + 5 H(+)(in) = a quinol + NAD(+) + 4 H(+)(out). NDH-1 shuttles electrons from NADH, via FMN and iron-sulfur (Fe-S) centers, to quinones in the respiratory chain. The immediate electron acceptor for the enzyme in this species is believed to be ubiquinone. Couples the redox reaction to proton translocation (for every two electrons transferred, four hydrogen ions are translocated across the cytoplasmic membrane), and thus conserves the redox energy in a proton gradient. This Maricaulis maris (strain MCS10) (Caulobacter maris) protein is NADH-quinone oxidoreductase subunit C.